We begin with the raw amino-acid sequence, 359 residues long: 1-deoxy-D-xylulose 5-phosphate reductoisomerase (359 aa).

8 residues coordinate NADPH: Thr7, Gly8, Ser9, Ile10, Gly31, Lys32, Asn33, and Asn111. Lys112 serves as a coordination point for 1-deoxy-D-xylulose 5-phosphate. Residue Glu113 coordinates NADPH. Asp131 is a binding site for Mn(2+). 4 residues coordinate 1-deoxy-D-xylulose 5-phosphate: Ser132, Glu133, Ser155, and His178. Glu133 is a binding site for Mn(2+). Gly184 provides a ligand contact to NADPH. Residues Ser191, Asn196, Lys197, and Glu200 each contribute to the 1-deoxy-D-xylulose 5-phosphate site. Residue Glu200 participates in Mn(2+) binding.

This sequence belongs to the DXR family. Requires Mg(2+) as cofactor. The cofactor is Mn(2+).

It carries out the reaction 2-C-methyl-D-erythritol 4-phosphate + NADP(+) = 1-deoxy-D-xylulose 5-phosphate + NADPH + H(+). Its pathway is isoprenoid biosynthesis; isopentenyl diphosphate biosynthesis via DXP pathway; isopentenyl diphosphate from 1-deoxy-D-xylulose 5-phosphate: step 1/6. Its function is as follows. Catalyzes the NADPH-dependent rearrangement and reduction of 1-deoxy-D-xylulose-5-phosphate (DXP) to 2-C-methyl-D-erythritol 4-phosphate (MEP). The protein is 1-deoxy-D-xylulose 5-phosphate reductoisomerase of Campylobacter lari (strain RM2100 / D67 / ATCC BAA-1060).